We begin with the raw amino-acid sequence, 235 residues long: tRNA (guanine-N(1)-)-methyltransferase (235 aa).

Residues G112 and 132–137 (IGDYVI) contribute to the S-adenosyl-L-methionine site.

It belongs to the RNA methyltransferase TrmD family. Homodimer.

The protein localises to the cytoplasm. It catalyses the reaction guanosine(37) in tRNA + S-adenosyl-L-methionine = N(1)-methylguanosine(37) in tRNA + S-adenosyl-L-homocysteine + H(+). In terms of biological role, specifically methylates guanosine-37 in various tRNAs. This chain is tRNA (guanine-N(1)-)-methyltransferase, found in Anaplasma marginale (strain Florida).